Reading from the N-terminus, the 81-residue chain is Conotoxin ArMKLT2-01 (81 aa).

The signal sequence occupies residues 1–19 (MKLTCVIIVVALFLTACHA). A propeptide spanning residues 20 to 43 (KDKQEHPAVRGSDDMQDSEDLKLA) is cleaved from the precursor. Intrachain disulfides connect cysteine 46–cysteine 61, cysteine 53–cysteine 65, and cysteine 60–cysteine 74.

Belongs to the conotoxin O1 superfamily. In terms of tissue distribution, expressed by the venom duct.

The protein resides in the secreted. In Conus arenatus (Sand-dusted cone), this protein is Conotoxin ArMKLT2-01.